Consider the following 296-residue polypeptide: 4-hydroxybenzoate octaprenyltransferase (296 aa).

Helical transmembrane passes span 29 to 49 (IGVY…GKGA), 52 to 72 (LQTV…GCVI), 102 to 122 (ALVL…FTNA), 146 to 166 (YYPQ…AFTA), 169 to 189 (GELP…TVGY), 219 to 239 (VIIL…GARF), 241 to 261 (LGAC…WEFW), and 275 to 295 (FLHN…DYAV).

It belongs to the UbiA prenyltransferase family. It depends on Mg(2+) as a cofactor.

It is found in the cell inner membrane. The enzyme catalyses all-trans-octaprenyl diphosphate + 4-hydroxybenzoate = 4-hydroxy-3-(all-trans-octaprenyl)benzoate + diphosphate. It participates in cofactor biosynthesis; ubiquinone biosynthesis. In terms of biological role, catalyzes the prenylation of para-hydroxybenzoate (PHB) with an all-trans polyprenyl group. Mediates the second step in the final reaction sequence of ubiquinone-8 (UQ-8) biosynthesis, which is the condensation of the polyisoprenoid side chain with PHB, generating the first membrane-bound Q intermediate 3-octaprenyl-4-hydroxybenzoate. The sequence is that of 4-hydroxybenzoate octaprenyltransferase from Pseudomonas syringae pv. syringae (strain B728a).